Reading from the N-terminus, the 500-residue chain is Cytochrome P450 2D28 (500 aa).

C446 provides a ligand contact to heme.

This sequence belongs to the cytochrome P450 family. Heme is required as a cofactor.

The protein localises to the endoplasmic reticulum membrane. It is found in the microsome membrane. In Mesocricetus auratus (Golden hamster), this protein is Cytochrome P450 2D28 (CYP2D28A).